Reading from the N-terminus, the 482-residue chain is Putative dipeptidase NECHADRAFT_87110 (482 aa).

Over residues 1–21 (MADTQTPNLQNTAEGDANTSA) the composition is skewed to polar residues. The tract at residues 1–24 (MADTQTPNLQNTAEGDANTSAENE) is disordered. Residue asparagine 18 is glycosylated (N-linked (GlcNAc...) asparagine). A helical membrane pass occupies residues 41-61 (WLRYPFLVAGIALFLGPFSFF). Residues histidine 90, aspartate 92, and glutamate 201 each coordinate Zn(2+). A disulfide bond links cysteine 141 and cysteine 230. Residue histidine 228 participates in substrate binding. Residues histidine 272 and histidine 293 each contribute to the Zn(2+) site. Positions 304 and 364 each coordinate substrate.

This sequence belongs to the metallo-dependent hydrolases superfamily. Peptidase M19 family. The cofactor is Zn(2+).

The protein resides in the membrane. It carries out the reaction an L-aminoacyl-L-amino acid + H2O = 2 an L-alpha-amino acid. In terms of biological role, hydrolyzes a wide range of dipeptides. In Fusarium vanettenii (strain ATCC MYA-4622 / CBS 123669 / FGSC 9596 / NRRL 45880 / 77-13-4) (Fusarium solani subsp. pisi), this protein is Putative dipeptidase NECHADRAFT_87110.